We begin with the raw amino-acid sequence, 393 residues long: Rhizopuspepsin (393 aa).

A signal peptide spans 1 to 21 (MKFTLISSCIAIAALAVAVDA). Residues 22-68 (APGEKKISIPLAKNPNYKPSAKNAIQKAIAKYNKHKINTSTGGIVPD) constitute a propeptide, activation peptide. The Peptidase A1 domain maps to 85-389 (YYGQVTIGTP…NQGVPEVQIA (305 aa)). Residue Asp103 is part of the active site. Residues Cys116 and Cys119 are joined by a disulfide bond. Residue Asp286 is part of the active site. Cys320 and Cys353 form a disulfide bridge.

This sequence belongs to the peptidase A1 family.

It catalyses the reaction Hydrolysis of proteins with broad specificity similar to that of pepsin A, preferring hydrophobic residues at P1 and P1'. Clots milk and activates trypsinogen. Does not cleave 4-Gln-|-His-5, but does cleave 10-His-|-Leu-11 and 12-Val-|-Glu-13 in B chain of insulin.. This is Rhizopuspepsin from Rhizopus chinensis (Bread mold).